The chain runs to 428 residues: Histidine--tRNA ligase (428 aa).

The protein belongs to the class-II aminoacyl-tRNA synthetase family. Homodimer.

Its subcellular location is the cytoplasm. It carries out the reaction tRNA(His) + L-histidine + ATP = L-histidyl-tRNA(His) + AMP + diphosphate + H(+). The polypeptide is Histidine--tRNA ligase (Mesomycoplasma hyopneumoniae (strain J / ATCC 25934 / NCTC 10110) (Mycoplasma hyopneumoniae)).